Reading from the N-terminus, the 65-residue chain is Light-harvesting protein B-800-850 alpha chain C (65 aa).

The Cytoplasmic segment spans residues 1–11 (MNQGRIWTVVS). Residues 12 to 35 (PTVGLPLLLGSVAAIAFAVHFAVL) traverse the membrane as a helical segment. Position 31 (histidine 31) interacts with a bacteriochlorophyll. Residues 36–65 (ENTSWVAAFMNGKSVAAAPAPAAPAAPAKK) lie on the Periplasmic side of the membrane.

Belongs to the antenna complex alpha subunit family. As to quaternary structure, the core complex is formed by different alpha and beta chains, binding bacteriochlorophyll molecules, and arranged most probably in tetrameric structures disposed around the reaction center. The non-pigmented gamma chains may constitute additional components.

Its subcellular location is the cell inner membrane. Its function is as follows. Antenna complexes are light-harvesting systems, which transfer the excitation energy to the reaction centers. The chain is Light-harvesting protein B-800-850 alpha chain C (pucAC) from Rhodopseudomonas palustris.